Reading from the N-terminus, the 1791-residue chain is Brefeldin A-inhibited guanine nucleotide-exchange protein 2 (1791 aa).

Residue Met-1 is modified to N-acetylmethionine. The DCB; DCB:DCB domain and DCB:HUS domain interaction stretch occupies residues 2-224 (QESQTKSMFV…KPQSPVIQAT (223 aa)). 2 disordered regions span residues 208–292 (LEKP…DNGA) and 311–350 (AAEK…IADD). Residues Ser-214, Ser-218, and Ser-227 each carry the phosphoserine modification. Over residues 214–225 (SKPQSPVIQATA) the composition is skewed to polar residues. Residues 233-243 (LKQSQAQSKPT) show a composition bias toward polar residues. Thr-244 carries the phosphothreonine modification. A compositionally biased stretch (basic and acidic residues) spans 244 to 257 (TPEKTELPNGDHAR). Ser-277 bears the Phosphoserine mark. 2 positions are modified to phosphoserine: Ser-355 and Ser-356. The segment at 515-535 (ADAQCVVDIYVNYDCDLNAAN) is HUS; DCB:HUS domain interaction. Ser-621 is subject to Phosphoserine. Residue Thr-623 is modified to Phosphothreonine. A Phosphoserine modification is found at Ser-624. Thr-633 is modified (phosphothreonine). Positions 661–792 (FNKKPKRGIQ…IIMLTTDLHS (132 aa)) constitute an SEC7 domain. Residues Ser-707, Ser-1518, Ser-1520, Ser-1521, Ser-1532, Ser-1535, Ser-1541, and Ser-1788 each carry the phosphoserine modification.

In terms of assembly, homodimer. Interacts with ARFGEF1/BIG1; both proteins are probably part of the same or very similar macromolecular complexes. Interacts with PRKAR1A, PRKAR2A, PRKAR1B, PRKAR2B, PPP1CC, PDE3A, TNFRSF1A, MYCBP and EXOC7. Interacts with GABRB1, GABRB2 and GABRB3. In vitro phosphorylated by PKA reducing its GEF activity and dephosphorylated by phosphatase PP1. In terms of tissue distribution, expressed in brain (at protein level).

The protein localises to the cytoplasm. Its subcellular location is the membrane. The protein resides in the golgi apparatus. It localises to the perinuclear region. It is found in the trans-Golgi network. The protein localises to the endosome. Its subcellular location is the cytoskeleton. The protein resides in the microtubule organizing center. It localises to the centrosome. It is found in the cell projection. The protein localises to the dendrite. Its subcellular location is the cytoplasmic vesicle. The protein resides in the synapse. With respect to regulation, inhibited by brefeldin A. In terms of biological role, promotes guanine-nucleotide exchange on ARF1 and ARF3 and to a lower extent on ARF5 and ARF6. Promotes the activation of ARF1/ARF5/ARF6 through replacement of GDP with GTP. Involved in the regulation of Golgi vesicular transport. Required for the integrity of the endosomal compartment. Involved in trafficking from the trans-Golgi network (TGN) to endosomes and is required for membrane association of the AP-1 complex and GGA1. Seems to be involved in recycling of the transferrin receptor from recycling endosomes to the plasma membrane. Probably is involved in the exit of GABA(A) receptors from the endoplasmic reticulum. Involved in constitutive release of tumor necrosis factor receptor 1 via exosome-like vesicles; the function seems to involve PKA and specifically PRKAR2B. Proposed to act as A kinase-anchoring protein (AKAP) and may mediate crosstalk between Arf and PKA pathways. In Rattus norvegicus (Rat), this protein is Brefeldin A-inhibited guanine nucleotide-exchange protein 2 (Arfgef2).